We begin with the raw amino-acid sequence, 490 residues long: Betaine aldehyde dehydrogenase (490 aa).

K(+)-binding residues include Thr-26, Ile-27, and Asp-93. NAD(+) is bound at residue 150-152 (GAW). The active-site Charge relay system is the Lys-162. NAD(+) is bound at residue 176–179 (KPSE). Val-180 is a K(+) binding site. 230 to 233 (GVAS) contributes to the NAD(+) binding site. A K(+)-binding site is contributed by Leu-246. Residue Glu-252 is the Proton acceptor of the active site. Gly-254, Cys-286, and Glu-387 together coordinate NAD(+). Catalysis depends on Cys-286, which acts as the Nucleophile. The residue at position 286 (Cys-286) is a Cysteine sulfenic acid (-SOH). 2 residues coordinate K(+): Lys-457 and Gly-460. Glu-464 serves as the catalytic Charge relay system.

This sequence belongs to the aldehyde dehydrogenase family. In terms of assembly, dimer of dimers. The cofactor is K(+).

It carries out the reaction betaine aldehyde + NAD(+) + H2O = glycine betaine + NADH + 2 H(+). The protein operates within amine and polyamine biosynthesis; betaine biosynthesis via choline pathway; betaine from betaine aldehyde: step 1/1. Its function is as follows. Involved in the biosynthesis of the osmoprotectant glycine betaine. Catalyzes the irreversible oxidation of betaine aldehyde to the corresponding acid. This is Betaine aldehyde dehydrogenase from Escherichia coli O6:K15:H31 (strain 536 / UPEC).